Here is a 201-residue protein sequence, read N- to C-terminus: 3-isopropylmalate dehydratase small subunit (201 aa).

Belongs to the LeuD family. LeuD type 1 subfamily. As to quaternary structure, heterodimer of LeuC and LeuD.

The enzyme catalyses (2R,3S)-3-isopropylmalate = (2S)-2-isopropylmalate. It functions in the pathway amino-acid biosynthesis; L-leucine biosynthesis; L-leucine from 3-methyl-2-oxobutanoate: step 2/4. Catalyzes the isomerization between 2-isopropylmalate and 3-isopropylmalate, via the formation of 2-isopropylmaleate. This is 3-isopropylmalate dehydratase small subunit from Enterobacter sp. (strain 638).